The following is a 115-amino-acid chain: Phosphoribosyl-AMP cyclohydrolase (115 aa).

Position 80 (D80) interacts with Mg(2+). C81 provides a ligand contact to Zn(2+). Residues D82 and D84 each coordinate Mg(2+). Residues C97 and C104 each coordinate Zn(2+).

It belongs to the PRA-CH family. As to quaternary structure, homodimer. Mg(2+) serves as cofactor. The cofactor is Zn(2+).

It is found in the cytoplasm. It carries out the reaction 1-(5-phospho-beta-D-ribosyl)-5'-AMP + H2O = 1-(5-phospho-beta-D-ribosyl)-5-[(5-phospho-beta-D-ribosylamino)methylideneamino]imidazole-4-carboxamide. It functions in the pathway amino-acid biosynthesis; L-histidine biosynthesis; L-histidine from 5-phospho-alpha-D-ribose 1-diphosphate: step 3/9. In terms of biological role, catalyzes the hydrolysis of the adenine ring of phosphoribosyl-AMP. In Nocardia farcinica (strain IFM 10152), this protein is Phosphoribosyl-AMP cyclohydrolase.